The sequence spans 109 residues: uncharacterized protein (109 aa).

The interval 1–26 (MTPRSLPRYGNSSRRKSFPMHRPSNV) is disordered.

This is an uncharacterized protein from Mycobacterium bovis (strain ATCC BAA-935 / AF2122/97).